We begin with the raw amino-acid sequence, 891 residues long: Dynein axonemal intermediate chain 3 (891 aa).

The span at 1–16 (MAPKQKKKSSRRKKSP) shows a compositional bias: basic residues. The segment at 1–27 (MAPKQKKKSSRRKKSPKPILAASEDME) is disordered. WD repeat units lie at residues 395–435 (ESPD…DRIE), 477–533 (GHKR…PLTP), 670–709 (IHDGIVHTIQRSPFYDDIILTVGGWNVAIWKESVMTGPLL), and 713–753 (CAPK…HEPA). The stretch at 817–861 (HLEYVEQRKKIREQEKKEMEQEMAKKKVKIYQKSKEQMEAELKMD) forms a coiled coil.

In terms of assembly, interacts with ACTR2; this interaction reduces binding of the Arp2/3 complex to the VCA domain of nucleation promoting factors. Part of the multisubunit axonemal dynein complex formed at least of two heavy chains and a number of intermediate and light chains. Found in a associated with the catalytic heavy chain DNAH2, the intermediate chain DNAI4, and the light chain DYNLT1.

It localises to the cytoplasm. Its function is as follows. Acts as a negative regulator of cell migration, invasion, and metastasis downstream of p53/TP53, through inhibition of Arp2/3 complex-mediated actin polymerization. Via its association with the multisubunit axonemal dynein complex, is potentially involved in the regulation of cilia function. May play a role in osteogenesis of dental tissue-derived mesenchymal stem cells. This Macaca fascicularis (Crab-eating macaque) protein is Dynein axonemal intermediate chain 3 (DNAI3).